The following is a 255-amino-acid chain: Imidazole glycerol phosphate synthase subunit HisF (255 aa).

Residues Asp-12 and Asp-131 contribute to the active site.

Belongs to the HisA/HisF family. Heterodimer of HisH and HisF.

It is found in the cytoplasm. The catalysed reaction is 5-[(5-phospho-1-deoxy-D-ribulos-1-ylimino)methylamino]-1-(5-phospho-beta-D-ribosyl)imidazole-4-carboxamide + L-glutamine = D-erythro-1-(imidazol-4-yl)glycerol 3-phosphate + 5-amino-1-(5-phospho-beta-D-ribosyl)imidazole-4-carboxamide + L-glutamate + H(+). The protein operates within amino-acid biosynthesis; L-histidine biosynthesis; L-histidine from 5-phospho-alpha-D-ribose 1-diphosphate: step 5/9. In terms of biological role, IGPS catalyzes the conversion of PRFAR and glutamine to IGP, AICAR and glutamate. The HisF subunit catalyzes the cyclization activity that produces IGP and AICAR from PRFAR using the ammonia provided by the HisH subunit. The polypeptide is Imidazole glycerol phosphate synthase subunit HisF (Salinispora tropica (strain ATCC BAA-916 / DSM 44818 / JCM 13857 / NBRC 105044 / CNB-440)).